The following is a 3142-amino-acid chain: Huntingtin (3142 aa).

The interval 3 to 13 (TLEKLMKAFES) is sufficient for interaction with TPR. The residue at position 9 (K9) is an N6-acetyllysine. The tract at residues 14 to 85 (LKSFQQQQQQ…PGPAVAEEPL (72 aa)) is disordered. Over residues 18-37 (QQQQQQQQQQQQQQQQQQQQ) the composition is skewed to low complexity. Over residues 38 to 78 (QPPPPPPPPPPPQLPQPPPQAQPLLPQPQPPPPPPPPPPGP) the composition is skewed to pro residues. N6-acetyllysine occurs at positions 176 and 234. HEAT repeat units lie at residues 204-241 (PYLV…SFGN), 246-283 (NEIK…HSRR), and 316-360 (LTLR…VYEL). K343 is subject to N6-acetyllysine. Residues S411, S417, S419, and S432 each carry the phosphoserine modification. At K442 the chain carries N6-acetyllysine. The interval 447 to 469 (EEEALEDDSESRSDVSSSALTAS) is disordered. Positions 491–502 (GHDIITEQPRSQ) are interaction with ZDHHC17. Residues 517 to 583 (LTSSATDGDE…TPSDSSEIVL (67 aa)) form a disordered region. A compositionally biased stretch (low complexity) spans 531–545 (SHSSSQVSAVPSDPA). Positions 550 to 579 (DGTQASSPISDSSQTTTEGPDSAVTPSDSS) are enriched in polar residues. A lipid anchor (N-myristoyl glycine) is attached at G551. Residues S640 and S643 each carry the phosphoserine modification. HEAT repeat units follow at residues 802 to 839 (FSLA…SLCS) and 902 to 940 (KLQE…KLFY). A disordered region spans residues 1176-1225 (PSLSPIRRKGKEKEPGEQASVPLSPKKGSEASAASRQSDTSGPVTTSKSS). 2 positions are modified to phosphoserine; by CDK5: S1179 and S1199. The segment covering 1207–1225 (SAASRQSDTSGPVTTSKSS) has biased composition (polar residues). Residues S1870 and S1874 each carry the phosphoserine modification. The interval 2330–2351 (ERRTNTPKAISEEEEEVDPNTQ) is disordered. Positions 2395–2404 (IIISLARLPL) match the Nuclear export signal motif. The segment at 2633-2662 (EEEWDEEEEEEADAPAPSSPPTSPVNSRKH) is disordered. Acidic residues predominate over residues 2634–2645 (EEWDEEEEEEAD).

It belongs to the huntingtin family. As to quaternary structure, interacts with PFN1. Interacts through its N-terminus with PRPF40A. Interacts with PQBP1. Interacts with SETD2. Interacts with SH3GLB1. Interacts with SYVN. Interacts with TPR; the interaction is inhibited by forms of Huntingtin with expanded polyglutamine stretch. Interacts with ZDHHC13 (via ANK repeats). Interacts with ZDHHC17 (via ANK repeats). Interacts with F8A1/F8A2/F8A3. Found in a complex with F8A1/F8A2/F8A3, HTT and RAB5A; mediates the recruitment of HTT by RAB5A. Cleaved by caspases downstream of the polyglutamine stretch. The resulting N-terminal fragments are cytotoxic and provokes apoptosis. Post-translationally, forms with expanded polyglutamine expansion are specifically ubiquitinated by SYVN1, which promotes their proteasomal degradation. In terms of processing, phosphorylation at Ser-1179 and Ser-1199 by CDK5 in response to DNA damage in nuclei of neurons protects neurons against polyglutamine expansion as well as DNA damage mediated toxicity. Myristoylated at Gly-551, following proteolytic cleavage at Asp-550. Expressed in the brain cortex (at protein level). Widely expressed with the highest level of expression in the brain (nerve fibers, varicosities, and nerve endings). In the brain, the regions where it can be mainly found are the cerebellar cortex, the neocortex, the striatum, and the hippocampal formation.

The protein resides in the cytoplasm. The protein localises to the nucleus. It is found in the early endosome. It localises to the cytoplasmic vesicle. Its subcellular location is the autophagosome. Its function is as follows. May play a role in microtubule-mediated transport or vesicle function. In terms of biological role, promotes the formation of autophagic vesicles. This is Huntingtin (HTT) from Homo sapiens (Human).